The following is a 410-amino-acid chain: Arginine biosynthesis bifunctional protein ArgJ (410 aa).

Substrate contacts are provided by T160, K186, T197, E283, N405, and T410. T197 functions as the Nucleophile in the catalytic mechanism.

It belongs to the ArgJ family. As to quaternary structure, heterotetramer of two alpha and two beta chains.

Its subcellular location is the cytoplasm. The catalysed reaction is N(2)-acetyl-L-ornithine + L-glutamate = N-acetyl-L-glutamate + L-ornithine. It catalyses the reaction L-glutamate + acetyl-CoA = N-acetyl-L-glutamate + CoA + H(+). It participates in amino-acid biosynthesis; L-arginine biosynthesis; L-ornithine and N-acetyl-L-glutamate from L-glutamate and N(2)-acetyl-L-ornithine (cyclic): step 1/1. It functions in the pathway amino-acid biosynthesis; L-arginine biosynthesis; N(2)-acetyl-L-ornithine from L-glutamate: step 1/4. Functionally, catalyzes two activities which are involved in the cyclic version of arginine biosynthesis: the synthesis of N-acetylglutamate from glutamate and acetyl-CoA as the acetyl donor, and of ornithine by transacetylation between N(2)-acetylornithine and glutamate. The sequence is that of Arginine biosynthesis bifunctional protein ArgJ from Geobacillus kaustophilus (strain HTA426).